Reading from the N-terminus, the 647-residue chain is Microtubule-associated protein 9 (647 aa).

S2 is subject to N-acetylserine. Y12 bears the Phosphotyrosine mark. Disordered regions lie at residues K127 to M323, S344 to A421, K491 to Q514, K530 to K553, N580 to I600, and Q613 to F647. Residues Q133 to K145 show a composition bias toward basic and acidic residues. Over residues I155–L166 the composition is skewed to polar residues. The span at P174–S186 shows a compositional bias: basic residues. Positions K184 to A210 form a coiled coil. The segment covering H187–A200 has biased composition (basic and acidic residues). Composition is skewed to polar residues over residues A210–G219 and C239–K249. Residues D268 to E287 show a composition bias toward basic and acidic residues. Residues A298–T328 adopt a coiled-coil conformation. A compositionally biased stretch (low complexity) spans N365–R374. Positions M443–E628 form a coiled coil.

As to quaternary structure, binds to purified microtubules via its C-terminus.

The protein localises to the cytoplasm. The protein resides in the cytoskeleton. It is found in the spindle. Involved in organization of the bipolar mitotic spindle. Required for bipolar spindle assembly, mitosis progression and cytokinesis. May act by stabilizing interphase microtubules. This is Microtubule-associated protein 9 (MAP9) from Homo sapiens (Human).